The sequence spans 408 residues: MATKPIAKVRKSVPKKVESQVGYFGSYGGRFVPETLMAALQELEAAYEAAKRDKKFKEEIESLLREYAGRPTPLFLAKNLTQKLGGAKIYLKREDLLHTGAHKINNCIGQGLLARRMGKHRIIAETGAGQHGVASATVAALFGMECVVYMGSEDVRRQELNVFRMKLLGAEVVSVNSGSRTLKDAINEAMRDWVTNVRTTHYLLGSVLGAHPYPMMVRDFHRVISREAKAQIMKAEGKLPTAIIACVGGGSNAIGAFYEFIGDKKVQLIGVEAGGRGKALGEHAARFRGGAPGVLQGTYSYVLQDEHGQIAGTHSVSAGLDYPAIGPEHAALAEAGRAEYVAASDAEALAACSMLAKTEGIIPALESSHAVAECVRRAPQMRKSDVVIVNISGRGDKDIGILREQLRF.

Position 103 is an N6-(pyridoxal phosphate)lysine (Lys-103).

It belongs to the TrpB family. As to quaternary structure, tetramer of two alpha and two beta chains. Pyridoxal 5'-phosphate serves as cofactor.

It carries out the reaction (1S,2R)-1-C-(indol-3-yl)glycerol 3-phosphate + L-serine = D-glyceraldehyde 3-phosphate + L-tryptophan + H2O. The protein operates within amino-acid biosynthesis; L-tryptophan biosynthesis; L-tryptophan from chorismate: step 5/5. Its function is as follows. The beta subunit is responsible for the synthesis of L-tryptophan from indole and L-serine. This is Tryptophan synthase beta chain from Koribacter versatilis (strain Ellin345).